Here is a 213-residue protein sequence, read N- to C-terminus: MEEIFKNYPLLKNQNVPRETLIEFDLFISMLQEENEKINIISKETAKNEVIRERHIVDSAQIIEFVDLNSNIITDIGSGGGMPGIIISIMIKNQKNLAKVHLYEKSHHKSSFLRKVSRDLKLNTEVMQENIFEAEKLDSGTIMARAFKPLPIILDLVYKNFNSYKNLIVFMGKNGEKVLEETLMNWDFDFEKKKSITSEDSFLLNIKKIKKKN.

S-adenosyl-L-methionine is bound by residues Gly-77, Met-82, 104 to 106, and Arg-145; that span reads EKS.

The protein belongs to the methyltransferase superfamily. RNA methyltransferase RsmG family.

The protein resides in the cytoplasm. It carries out the reaction guanosine(527) in 16S rRNA + S-adenosyl-L-methionine = N(7)-methylguanosine(527) in 16S rRNA + S-adenosyl-L-homocysteine. In terms of biological role, specifically methylates the N7 position of guanine in position 527 of 16S rRNA. This Pelagibacter ubique (strain HTCC1062) protein is Ribosomal RNA small subunit methyltransferase G.